We begin with the raw amino-acid sequence, 449 residues long: Phosphoglucosamine mutase (449 aa).

S100 (phosphoserine intermediate) is an active-site residue. Residues S100, D241, D243, and D245 each coordinate Mg(2+). Position 100 is a phosphoserine (S100).

It belongs to the phosphohexose mutase family. Mg(2+) serves as cofactor. In terms of processing, activated by phosphorylation.

The catalysed reaction is alpha-D-glucosamine 1-phosphate = D-glucosamine 6-phosphate. Catalyzes the conversion of glucosamine-6-phosphate to glucosamine-1-phosphate. This is Phosphoglucosamine mutase from Caldicellulosiruptor bescii (strain ATCC BAA-1888 / DSM 6725 / KCTC 15123 / Z-1320) (Anaerocellum thermophilum).